We begin with the raw amino-acid sequence, 376 residues long: Fructose-1,6-bisphosphate aldolase/phosphatase (376 aa).

Asp11 functions as the Proton acceptor; for FBP phosphatase activity in the catalytic mechanism. Positions 11, 18, 49, and 50 each coordinate Mg(2+). His18 is a beta-D-fructose 1,6-bisphosphate binding site. Position 18 (His18) interacts with dihydroxyacetone phosphate. Tyr87 is a beta-D-fructose 1,6-bisphosphate binding site. Residue Gln91 participates in Mg(2+) binding. 100-101 (GN) serves as a coordination point for beta-D-fructose 1,6-bisphosphate. Asp128 is a Mg(2+) binding site. Lys129 is a binding site for beta-D-fructose 1,6-bisphosphate. Lys129 serves as a coordination point for dihydroxyacetone phosphate. Tyr224 acts as the Proton donor/acceptor; for FBP aldolase activity in catalysis. Mg(2+) contacts are provided by Lys227, Asp228, and Asp229. Lys227 acts as the Schiff-base intermediate with DHAP; for FBP aldolase activity in catalysis. Residues 237-238 (QK), Arg261, and Tyr342 each bind beta-D-fructose 1,6-bisphosphate. Residue Arg261 participates in dihydroxyacetone phosphate binding. The tract at residues 357–376 (MVPLKDSGPAGTGRAYEDPD) is disordered.

This sequence belongs to the FBP aldolase/phosphatase family. Homooctamer; dimer of tetramers. The cofactor is Mg(2+).

It carries out the reaction beta-D-fructose 1,6-bisphosphate + H2O = beta-D-fructose 6-phosphate + phosphate. The enzyme catalyses beta-D-fructose 1,6-bisphosphate = D-glyceraldehyde 3-phosphate + dihydroxyacetone phosphate. The protein operates within carbohydrate biosynthesis; gluconeogenesis. Functionally, catalyzes two subsequent steps in gluconeogenesis: the aldol condensation of dihydroxyacetone phosphate (DHAP) and glyceraldehyde-3-phosphate (GA3P) to fructose-1,6-bisphosphate (FBP), and the dephosphorylation of FBP to fructose-6-phosphate (F6P). In Cenarchaeum symbiosum (strain A), this protein is Fructose-1,6-bisphosphate aldolase/phosphatase.